A 109-amino-acid chain; its full sequence is T cell receptor alpha variable 25 (109 aa).

Residues Met-1–Gly-19 form the signal peptide. The Ig-like domain maps to Gln-20–Gly-109. Cysteines 41 and 107 form a disulfide. N-linked (GlcNAc...) asparagine glycosylation is found at Asn-42 and Asn-89.

Alpha-beta TR is a heterodimer composed of an alpha and beta chain; disulfide-linked. The alpha-beta TR is associated with the transmembrane signaling CD3 coreceptor proteins to form the TR-CD3 (TcR or TCR). The assembly of alpha-beta TR heterodimers with CD3 occurs in the endoplasmic reticulum where a single alpha-beta TR heterodimer associates with one CD3D-CD3E heterodimer, one CD3G-CD3E heterodimer and one CD247 homodimer forming a stable octameric structure. CD3D-CD3E and CD3G-CD3E heterodimers preferentially associate with TR alpha and TR beta chains, respectively. The association of the CD247 homodimer is the last step of TcR assembly in the endoplasmic reticulum and is required for transport to the cell surface.

Its subcellular location is the cell membrane. In terms of biological role, v region of the variable domain of T cell receptor (TR) alpha chain that participates in the antigen recognition. Alpha-beta T cell receptors are antigen specific receptors which are essential to the immune response and are present on the cell surface of T lymphocytes. Recognize peptide-major histocompatibility (MH) (pMH) complexes that are displayed by antigen presenting cells (APC), a prerequisite for efficient T cell adaptive immunity against pathogens. Binding of alpha-beta TR to pMH complex initiates TR-CD3 clustering on the cell surface and intracellular activation of LCK that phosphorylates the ITAM motifs of CD3G, CD3D, CD3E and CD247 enabling the recruitment of ZAP70. In turn ZAP70 phosphorylates LAT, which recruits numerous signaling molecules to form the LAT signalosome. The LAT signalosome propagates signal branching to three major signaling pathways, the calcium, the mitogen-activated protein kinase (MAPK) kinase and the nuclear factor NF-kappa-B (NF-kB) pathways, leading to the mobilization of transcription factors that are critical for gene expression and essential for T cell growth and differentiation. The T cell repertoire is generated in the thymus, by V-(D)-J rearrangement. This repertoire is then shaped by intrathymic selection events to generate a peripheral T cell pool of self-MH restricted, non-autoaggressive T cells. Post-thymic interaction of alpha-beta TR with the pMH complexes shapes TR structural and functional avidity. This is T cell receptor alpha variable 25 from Homo sapiens (Human).